A 44-amino-acid chain; its full sequence is Protein PsbN (44 aa).

Residues 6–26 (FFFTIFLWCLLLSVTGYSVYV) traverse the membrane as a helical segment.

The protein belongs to the PsbN family.

Its subcellular location is the plastid. It localises to the chloroplast thylakoid membrane. Functionally, may play a role in photosystem I and II biogenesis. This chain is Protein PsbN, found in Oltmannsiellopsis viridis (Marine flagellate).